The sequence spans 642 residues: Epithelial sodium channel subunit alpha (642 aa).

Residues 1–81 (MHQVVTVKAE…VCSKRNKMKT (81 aa)) are Cytoplasmic-facing. A helical membrane pass occupies residues 82-102 (AFWSVLFFLTFGLMYWQFGIL). The Extracellular segment spans residues 103–553 (YREYFSFPVN…NQWSLWFGSS (451 aa)). 10 cysteine pairs are disulfide-bonded: Cys130–Cys297, Cys222–Cys229, Cys274–Cys281, Cys385–Cys470, Cys407–Cys447, Cys407–Cys466, Cys411–Cys462, Cys420–Cys447, Cys420–Cys470, and Cys422–Cys436. Residues 170 to 209 (GAAQSSQKRSQRSLSHHVQRHPLRRRKRNEPVSLKGNSPP) are disordered. A compositionally biased stretch (basic residues) spans 178-197 (RSQRSLSHHVQRHPLRRRKR). A helical transmembrane segment spans residues 554 to 574 (VLSVVELAELILDFIAITIIL). The Cytoplasmic segment spans residues 575–642 (SFKRFRSRQV…RDGEAVIGLE (68 aa)). A disordered region spans residues 587–608 (PSVPPPGAHDNTAFQSEPADPS).

This sequence belongs to the amiloride-sensitive sodium channel (TC 1.A.6) family. SCNN1A subfamily. As to quaternary structure, heterotrimer; disulfide-linked and containing an alpha/SCNN1A, a beta/SCNN1B and a gamma/SCNN1G subunit.

The protein localises to the apical cell membrane. The protein resides in the cell projection. It is found in the cilium. Its subcellular location is the cytoplasmic granule. It localises to the cytoplasm. The protein localises to the cytoplasmic vesicle. The protein resides in the secretory vesicle. It is found in the acrosome. Its subcellular location is the flagellum. The enzyme catalyses Na(+)(in) = Na(+)(out). Its activity is regulated as follows. Originally identified and characterized by its inhibition by the diuretic drug amiloride. In terms of biological role, this is one of the three pore-forming subunits of the heterotrimeric epithelial sodium channel (ENaC), a critical regulator of sodium balance and fluid homeostasis. ENaC operates in epithelial tissues, where it mediates the electrodiffusion of sodium ions from extracellular fluid through the apical membrane of cells, with water following osmotically. The protein is Epithelial sodium channel subunit alpha of Pelodiscus sinensis (Chinese softshell turtle).